Reading from the N-terminus, the 230-residue chain is Demethylluteothin O-methyltransferase (230 aa).

It belongs to the methyltransferase superfamily.

The enzyme catalyses demethylluteothin + S-adenosyl-L-methionine = luteothin + S-adenosyl-L-homocysteine. It participates in antibiotic biosynthesis. The protein operates within polyketide biosynthesis. Its function is as follows. Methyltransferase involved in the biosynthesis of the antibiotic aureothin, a nitroaryl polyketide metabolite with antifungal, cytotoxic and insecticidal activities. Catalyzes the methylation of demethylluteothin to luteothin (also called deoxyaureothin). Is specific for its gamma-pyrone substrate, and does not act on the alpha-pyrone isomer. In Streptomyces thioluteus, this protein is Demethylluteothin O-methyltransferase.